A 112-amino-acid chain; its full sequence is Protein FAM32A (112 aa).

A disordered region spans residues 15–35; that stretch reads KGCGDMSLGKKKKKKNKANDQ.

This sequence belongs to the FAM32 family.

The protein localises to the nucleus. Functionally, may induce G2 arrest and apoptosis. May also increase cell sensitivity to apoptotic stimuli. The polypeptide is Protein FAM32A (fam32a) (Xenopus tropicalis (Western clawed frog)).